We begin with the raw amino-acid sequence, 1288 residues long: Disease resistance protein RRS1 (1288 aa).

The TIR domain maps to 5–146 (EKDEEFVCIS…EIVRDVYETH (142 aa)). Residues 25–26 (SH) form an important for interaction with RPS4 region. Residues 170–421 (IGIRCVGIWG…LLEGCGFFPH (252 aa)) form the NB-ARC domain. 179-186 (GMPGIGKT) contacts ATP. LRR repeat units lie at residues 498-522 (SEEI…AFKN), 535-553 (NPEV…HSLP), 554-575 (NELR…NFDP), 577-598 (HLVE…TKNL), 621-646 (AENL…RLLR), 665-688 (PPNI…TVKP), 697-720 (LTEI…NSSC), 740-764 (LPNM…SIQG), 766-791 (PRFL…SLEI), 792-807 (LNAH…NMAN), 808-829 (LEFL…QGFP), and 830-852 (RNLK…PLSL). The Nuclear localization signal signature appears at 986-1003 (RKFHCWAPWQVVPKVRKD). Positions 1202–1270 (IPAIDEGDLW…YLSEHNHPRP (69 aa)) form a DNA-binding region, WRKY. The segment at 1267–1288 (HPRPTKRKALADSTRSTSSSIC) is disordered. The segment covering 1279-1288 (STRSTSSSIC) has biased composition (polar residues).

This sequence belongs to the disease resistance TIR-NB-LRR family. In terms of assembly, interacts with PopP2, a R.solanacearum type III effector. Interacts with RPS4.

It is found in the nucleus. Its subcellular location is the cytoplasm. Its function is as follows. Transcription factor. Interacts specifically with the W box (5'-(T)TGAC[CT]-3'), a frequently occurring elicitor-responsive cis-acting element. Also acts as a disease resistance protein involved in resistance to fungal and bacterial pathogens, including R.solanacearum, P.syringae pv. tomato and C.higginsianum. Heterodimerization with RPS4 is required to form a functional complex to recognize AvrRps4 and PopP2. Contributes to temperature-conditioned RPS4 auto-immunity. This Arabidopsis thaliana (Mouse-ear cress) protein is Disease resistance protein RRS1.